Consider the following 180-residue polypeptide: uncharacterized protein (180 aa).

Residues 114-136 show a composition bias toward basic and acidic residues; that stretch reads DKISESDSLPDEYKEYVVKHDSD. Residues 114-180 are disordered; it reads DKISESDSLP…NFDNPDDNPK (67 aa). Positions 137–146 are enriched in acidic residues; the sequence is NSDNDSDNSD. Residues 147–173 are compositionally biased toward low complexity; that stretch reads NDSNNSDNDSNNSDSDSDNSNDPNNFD.

This is an uncharacterized protein from Acanthamoeba polyphaga (Amoeba).